The following is a 295-amino-acid chain: Lipoyl synthase (295 aa).

Residues cysteine 34, cysteine 39, cysteine 45, cysteine 60, cysteine 64, cysteine 67, and serine 273 each contribute to the [4Fe-4S] cluster site. The Radical SAM core domain maps to 46-262 (WNKRHATIMI…KLMAYAKGFS (217 aa)).

It belongs to the radical SAM superfamily. Lipoyl synthase family. [4Fe-4S] cluster serves as cofactor.

Its subcellular location is the cytoplasm. It catalyses the reaction [[Fe-S] cluster scaffold protein carrying a second [4Fe-4S](2+) cluster] + N(6)-octanoyl-L-lysyl-[protein] + 2 oxidized [2Fe-2S]-[ferredoxin] + 2 S-adenosyl-L-methionine + 4 H(+) = [[Fe-S] cluster scaffold protein] + N(6)-[(R)-dihydrolipoyl]-L-lysyl-[protein] + 4 Fe(3+) + 2 hydrogen sulfide + 2 5'-deoxyadenosine + 2 L-methionine + 2 reduced [2Fe-2S]-[ferredoxin]. Its pathway is protein modification; protein lipoylation via endogenous pathway; protein N(6)-(lipoyl)lysine from octanoyl-[acyl-carrier-protein]: step 2/2. Its function is as follows. Catalyzes the radical-mediated insertion of two sulfur atoms into the C-6 and C-8 positions of the octanoyl moiety bound to the lipoyl domains of lipoate-dependent enzymes, thereby converting the octanoylated domains into lipoylated derivatives. The protein is Lipoyl synthase of Anaplasma marginale (strain St. Maries).